The primary structure comprises 370 residues: tRNA (guanine(26)-N(2))-dimethyltransferase (370 aa).

The Trm1 methyltransferase domain occupies 4–368; it reads TWVTEGRTTI…APLEEIRDCI (365 aa). The S-adenosyl-L-methionine site is built by arginine 41, arginine 66, aspartate 82, aspartate 108, and alanine 109. Positions 237, 240, 256, and 259 each coordinate Zn(2+).

This sequence belongs to the class I-like SAM-binding methyltransferase superfamily. Trm1 family.

It carries out the reaction guanosine(26) in tRNA + 2 S-adenosyl-L-methionine = N(2)-dimethylguanosine(26) in tRNA + 2 S-adenosyl-L-homocysteine + 2 H(+). Dimethylates a single guanine residue at position 26 of a number of tRNAs using S-adenosyl-L-methionine as donor of the methyl groups. The polypeptide is tRNA (guanine(26)-N(2))-dimethyltransferase (Methanospirillum hungatei JF-1 (strain ATCC 27890 / DSM 864 / NBRC 100397 / JF-1)).